Reading from the N-terminus, the 355-residue chain is Heat-inducible transcription repressor HrcA (355 aa).

Belongs to the HrcA family.

Negative regulator of class I heat shock genes (grpE-dnaK-dnaJ and groELS operons). Prevents heat-shock induction of these operons. This Nitratidesulfovibrio vulgaris (strain DSM 19637 / Miyazaki F) (Desulfovibrio vulgaris) protein is Heat-inducible transcription repressor HrcA.